The following is a 518-amino-acid chain: Putative cysteine ligase BshC (518 aa).

A coiled-coil region spans residues 404–474 (AAASAERLAA…RARQLTRLKR (71 aa)).

Belongs to the BshC family.

In Deinococcus geothermalis (strain DSM 11300 / CIP 105573 / AG-3a), this protein is Putative cysteine ligase BshC.